The following is a 437-amino-acid chain: Serine hydroxymethyltransferase (437 aa).

Residues Leu130 and 134–136 (GHL) each bind (6S)-5,6,7,8-tetrahydrofolate. Lys239 is modified (N6-(pyridoxal phosphate)lysine). Position 363 to 365 (363 to 365 (TPF)) interacts with (6S)-5,6,7,8-tetrahydrofolate.

Belongs to the SHMT family. In terms of assembly, homodimer. The cofactor is pyridoxal 5'-phosphate.

Its subcellular location is the cytoplasm. The catalysed reaction is (6R)-5,10-methylene-5,6,7,8-tetrahydrofolate + glycine + H2O = (6S)-5,6,7,8-tetrahydrofolate + L-serine. It participates in one-carbon metabolism; tetrahydrofolate interconversion. Its pathway is amino-acid biosynthesis; glycine biosynthesis; glycine from L-serine: step 1/1. Its function is as follows. Catalyzes the reversible interconversion of serine and glycine with tetrahydrofolate (THF) serving as the one-carbon carrier. This reaction serves as the major source of one-carbon groups required for the biosynthesis of purines, thymidylate, methionine, and other important biomolecules. Also exhibits THF-independent aldolase activity toward beta-hydroxyamino acids, producing glycine and aldehydes, via a retro-aldol mechanism. The sequence is that of Serine hydroxymethyltransferase from Bartonella henselae (strain ATCC 49882 / DSM 28221 / CCUG 30454 / Houston 1) (Rochalimaea henselae).